Here is a 1806-residue protein sequence, read N- to C-terminus: Atrochrysone carboxylic acid synthase (1806 aa).

Residues Asp30–His283 form an N-terminal acylcarrier protein transacylase domain (SAT) region. The Ketosynthase family 3 (KS3) domain maps to Gln416–Glu850. Active-site for beta-ketoacyl synthase activity residues include Cys589, His725, and His768. Positions Phe951–Val1270 are malonyl-CoA:ACP transacylase (MAT) domain. The interval Thr1340 to Ala1659 is product template (PT) domain. An N-terminal hotdog fold region spans residues Gln1344 to Leu1479. A PKS/mFAS DH domain is found at Gln1344–Asn1654. Residue His1376 is the Proton acceptor; for dehydratase activity of the active site. Residues Ile1506 to Asn1654 are C-terminal hotdog fold. Asp1565 functions as the Proton donor; for dehydratase activity in the catalytic mechanism. A disordered region spans residues His1668–Ala1726. The span at Pro1685–Pro1708 shows a compositional bias: low complexity. The segment covering Ala1709–Ala1721 has biased composition (pro residues). The Carrier domain occupies Gly1728–Tyr1805. The residue at position 1765 (Ser1765) is an O-(pantetheine 4'-phosphoryl)serine.

It carries out the reaction holo-[ACP] + 8 malonyl-CoA + 8 H(+) = atrochrysone carboxyl-[ACP] + 8 CO2 + 8 CoA + 2 H2O. It functions in the pathway secondary metabolite biosynthesis. Functionally, atrochrysone carboxylic acid synthase; part of the gene cluster that mediates the biosynthesis of monodictyphenone, a prenyl xanthone derivative. The pathway begins with the synthesis of atrochrysone thioester by the polyketide synthase (PKS) mdpG. The atrochrysone carboxyl ACP thioesterase mdpF then breaks the thioester bond and releases the atrochrysone carboxylic acid from mdpG. The atrochrysone carboxylic acid is then converted to atrochrysone which is further transformed into emodin anthrone. The next step is performed by the anthrone oxygenase mdpH that catalyzes the oxidation of emodinanthrone to emodin. Emodin is further modified to yield monodictyphenone via several steps involving mdpB, mdpC mdpJ, mdpK and mdpL. The short chain dehydrogenase mdpC converts the tautomers of emodin hydroquinone into the 3-hydroxy-3,4-dihydroan-thracen-1(2H)-one derivative. These enzymes with xptA, xptB and xptC are also proposed to be involved in the synthesis of shamixanthone from emodin. Especially, direct reduction of emodin by the short chain dehydrogenase mdpC followed by dehydration catalyzed by the scytalone dehydratase-like protein mdpB gives loss of oxygen and formation of chrysophanol intermediate in two simple steps. The chain is Atrochrysone carboxylic acid synthase from Emericella nidulans (strain FGSC A4 / ATCC 38163 / CBS 112.46 / NRRL 194 / M139) (Aspergillus nidulans).